Reading from the N-terminus, the 1530-residue chain is Coiled-coil domain-containing protein 141 (1530 aa).

A Spectrin repeat occupies 49 to 127 (NLLEIGSSQD…SMLERRRELL (79 aa)). The residue at position 91 (T91) is a Phosphothreonine. Coiled coils occupy residues 220-251 (IDSLLELLQDRRRQLDKHLQQQRQELSQVLQL), 758-785 (LKEKAEQLKDLIHLHQRQRERIQEYEEI), and 865-967 (AKSL…VNKK). Disordered stretches follow at residues 1153–1240 (SEER…PASS), 1259–1285 (LGKAPESVLPPPTAFTDGYHNKKDTFT), 1324–1356 (PREVHDKALPPSSQAQEISLGTQEKVHADSNVT), and 1369–1403 (SPGLSSQSDTSRSHQRQVGPQGDRKNSSAEKSVVS). Over residues 1334–1345 (PSSQAQEISLGT) the composition is skewed to polar residues. Residues 1409–1497 (PHFSRLLSNV…GTLSSKAILH (89 aa)) form the Ig-like domain.

As to quaternary structure, interacts with DISC1. Interacts preferentially with phosphorylated forms of myosin regulatory light chain (MRLC). Interacts (via the N-terminal region) with HDAC6; inhibits the deacetylase activity of HDAC6. Interacts with KIBRA (via the C-terminal region); retains AMPAR in the cytosol after internalization. Post-translationally, ubiquitinated and degradated by the CDC20-APC/C pathway. During brain development, CDC20-APC/C complex degrades CCDC141 after centrosome translocation into the dilated area. CCDC141 is restabilized in the dilation until the centrosome enters the dilation, at which point it is once again immediately destabilized by CDC20-APC/C complex. The oscillatory regulation of CCDC141 protein is needed for proper cortical migration. In terms of processing, phosphorylation at Thr-91 by PLK1 affects CCDC141 degradation.

Its subcellular location is the cytoplasm. The protein resides in the cytoskeleton. It is found in the microtubule organizing center. The protein localises to the centrosome. Plays a critical role in cortical radial and GnRH neurons migration during brain development. Regulates cortical radial migration by negatively controlling the activity of histone deacetylase 6 (HDAC6) and promotes centrosome maturation. CAMDI is required for dilation formation of cortical neurons during radial migration. Plays a critical role in learning and memory performance through regulation of AMPA-selective glutamate receptors (AMPARs) cell surface expression in competition with KIBRA. The protein is Coiled-coil domain-containing protein 141 of Rattus norvegicus (Rat).